The chain runs to 338 residues: Ketol-acid reductoisomerase (NADP(+)) (338 aa).

In terms of domain architecture, KARI N-terminal Rossmann spans 1 to 181 (MKVYYDKDAD…GGTKGGVIET (181 aa)). NADP(+)-binding positions include 24 to 27 (YGSQ), arginine 47, serine 52, and 82 to 85 (DESQ). The active site involves histidine 107. An NADP(+)-binding site is contributed by glycine 133. One can recognise a KARI C-terminal knotted domain in the interval 182–327 (NFREETETDL…AELRAMMPWI (146 aa)). Mg(2+)-binding residues include aspartate 190, glutamate 194, glutamate 226, and glutamate 230. Serine 251 contacts substrate.

This sequence belongs to the ketol-acid reductoisomerase family. Mg(2+) serves as cofactor.

The catalysed reaction is (2R)-2,3-dihydroxy-3-methylbutanoate + NADP(+) = (2S)-2-acetolactate + NADPH + H(+). It carries out the reaction (2R,3R)-2,3-dihydroxy-3-methylpentanoate + NADP(+) = (S)-2-ethyl-2-hydroxy-3-oxobutanoate + NADPH + H(+). It participates in amino-acid biosynthesis; L-isoleucine biosynthesis; L-isoleucine from 2-oxobutanoate: step 2/4. The protein operates within amino-acid biosynthesis; L-valine biosynthesis; L-valine from pyruvate: step 2/4. Its function is as follows. Involved in the biosynthesis of branched-chain amino acids (BCAA). Catalyzes an alkyl-migration followed by a ketol-acid reduction of (S)-2-acetolactate (S2AL) to yield (R)-2,3-dihydroxy-isovalerate. In the isomerase reaction, S2AL is rearranged via a Mg-dependent methyl migration to produce 3-hydroxy-3-methyl-2-ketobutyrate (HMKB). In the reductase reaction, this 2-ketoacid undergoes a metal-dependent reduction by NADPH to yield (R)-2,3-dihydroxy-isovalerate. The chain is Ketol-acid reductoisomerase (NADP(+)) from Chromobacterium violaceum (strain ATCC 12472 / DSM 30191 / JCM 1249 / CCUG 213 / NBRC 12614 / NCIMB 9131 / NCTC 9757 / MK).